Reading from the N-terminus, the 123-residue chain is Mediator of RNA polymerase II transcription subunit 9 (123 aa).

Positions 95-123 form a coiled coil; the sequence is WQLHIQEKKIELEKKTKHLQRLRESIQKQ.

Belongs to the Mediator complex subunit 9 family. As to quaternary structure, component of the Mediator complex.

Its subcellular location is the nucleus. Component of the Mediator complex, a coactivator involved in the regulated transcription of nearly all RNA polymerase II-dependent genes. Mediator functions as a bridge to convey information from gene-specific regulatory proteins to the basal RNA polymerase II transcription machinery. Mediator is recruited to promoters by direct interactions with regulatory proteins and serves as a scaffold for the assembly of a functional preinitiation complex with RNA polymerase II and the general transcription factors. This is Mediator of RNA polymerase II transcription subunit 9 (CSE2) from Kluyveromyces lactis (strain ATCC 8585 / CBS 2359 / DSM 70799 / NBRC 1267 / NRRL Y-1140 / WM37) (Yeast).